The primary structure comprises 287 residues: ATP synthase gamma chain (287 aa).

Belongs to the ATPase gamma chain family. As to quaternary structure, F-type ATPases have 2 components, CF(1) - the catalytic core - and CF(0) - the membrane proton channel. CF(1) has five subunits: alpha(3), beta(3), gamma(1), delta(1), epsilon(1). CF(0) has three main subunits: a, b and c.

It is found in the cell membrane. Its function is as follows. Produces ATP from ADP in the presence of a proton gradient across the membrane. The gamma chain is believed to be important in regulating ATPase activity and the flow of protons through the CF(0) complex. This is ATP synthase gamma chain from Wolbachia sp. subsp. Drosophila simulans (strain wRi).